The following is a 1111-amino-acid chain: Myosin IB heavy chain (1111 aa).

The 683-residue stretch at 9–691 folds into the Myosin motor domain; the sequence is QGTDDLVMLP…TVFLLEEALD (683 aa). 102–109 lines the ATP pocket; the sequence is GESGAGKT. Position 332 is a phosphoserine (S332). The segment at 547–627 is actin-binding; that stretch reads GSLQKKRPTT…GFAYRNTFDK (81 aa). A TH1 domain is found at 729 to 913; it reads KERQRNSIDR…KGLIGTIASG (185 aa). A disordered region spans residues 910–1058; sequence IASGLPSSTD…PAPQPSRPTA (149 aa). Residues 914–928 are compositionally biased toward polar residues; the sequence is LPSSTDSTPKNYNPN. Composition is skewed to low complexity over residues 929–944, 952–967, and 991–1012; these read SMSQ…QSAG, GAGQ…QQRP, and PMGA…LPQP. Residues 1017–1040 show a composition bias toward gly residues; it reads GAPGGRGAPMGRGAPGGGPAGAGG. Residues 1053–1111 form the SH3 domain; it reads PSRPTAKALYDYDASSTDELSFKEGDIIFIVQKDNGGWTQGELKSGQKGWAPTNYLQYN.

Belongs to the TRAFAC class myosin-kinesin ATPase superfamily. Myosin family. Myosin I heavy chain is single-headed. Dimer of a heavy and a light chain. Inability to self-assemble into filaments.

The protein localises to the cell projection. Its subcellular location is the pseudopodium. It is found in the cytoplasm. The protein resides in the cell cortex. Its function is as follows. Myosin is a protein that binds to actin and has ATPase activity that is activated by actin. Myosin IB may have a role in chemotaxis and aggregation; it could serve to stabilize and even retract cortical structures, such as pseudopods and lamellopods. Involved in the whole cell motility of aggregation-stages cells. Overexpression results in significant decrease in the rate of cellular translocation and fluid-phase pinocytosis and abnormalities in the normal rearrangement of the actin cytoskeleton. The chain is Myosin IB heavy chain (myoB) from Dictyostelium discoideum (Social amoeba).